The sequence spans 89 residues: Small ribosomal subunit protein uS15 (89 aa).

Belongs to the universal ribosomal protein uS15 family. Part of the 30S ribosomal subunit. Forms a bridge to the 50S subunit in the 70S ribosome, contacting the 23S rRNA.

One of the primary rRNA binding proteins, it binds directly to 16S rRNA where it helps nucleate assembly of the platform of the 30S subunit by binding and bridging several RNA helices of the 16S rRNA. Functionally, forms an intersubunit bridge (bridge B4) with the 23S rRNA of the 50S subunit in the ribosome. This chain is Small ribosomal subunit protein uS15, found in Anaeromyxobacter dehalogenans (strain 2CP-1 / ATCC BAA-258).